Consider the following 246-residue polypeptide: Nodulin-25 (246 aa).

Positions 1–24 (MVYSNTYMLLGLGVFVLLSSHVLA) are cleaved as a signal peptide.

The protein localises to the symbiosome. It localises to the peribacteroid space. In terms of biological role, involved in the development and function of nodules. It might participate in the biological process of symbiotic nitrogen fixation. The polypeptide is Nodulin-25 (NMS-25) (Medicago sativa (Alfalfa)).